The chain runs to 577 residues: MGKLIKLITTLTVLVSLLQYCCEFNSGSISCERTQTLCHYTNPRVWNTYFSRNCELYKNKVSPGFDIVARKYDTAVKPVIDDATVKVNKAAIQPAFKVIHSQCKKWNCGKYYQLVRSPMVKTRRFFFAKYNAFVKPNLDKFFTAEFRSHLKERILKYKNIGHYYFTITSRCIKSKYDFTVGNTEEKLMGKFKNKDTHGIHGSVTREPSSEDMVLTVSTMESDEEELTTTSTQTVVETITLDQEEASAVANHAHDDEASTDVEGSTDVNVNEQALLQEDFDMWSETILQKTQDVIQLFEKDVSKYINGKLVEEANHFKAKFQSLDDKSKKFFSKISLAINDIECVEGIDSETGKKIFFDKSGSTEISQYITRELVREYFNETRSTLDELTNAMEKDLSEITDEIEKKVNAIREENVEVFEEWGDIIVNEWSKRMAYVDVINAHMGADDDTTLDEEKAKSSVNWKKFLKGKKQIIESRDKLAHHSADLSRVNAFRQKVQKKILSFTQESGEFLYILRSKANLQFQERERKERERKEREKAAAEEFQRQQELLRQQEEEDEEDVSYTSTSTITTTTTMTL.

A signal peptide spans 1-23 (MGKLIKLITTLTVLVSLLQYCCE). 2 coiled-coil regions span residues 379–416 (NETRSTLDELTNAMEKDLSEITDEIEKKVNAIREENVE) and 513–561 (ILRS…EEDV). The span at 525–545 (RERKERERKEREKAAAEEFQR) shows a compositional bias: basic and acidic residues. The segment at 525-577 (RERKERERKEREKAAAEEFQRQQELLRQQEEEDEEDVSYTSTSTITTTTTMTL) is disordered. Low complexity predominate over residues 562-577 (SYTSTSTITTTTTMTL).

This sequence belongs to the SHE10 family. In terms of assembly, component of the mitochondria-localized RNase mitochondrial RNA-processing (RNase MRP) composed of one single RNA encoded by the NME1 gene and at least 31 proteins. Absent in the nucleus-localized RNase MRP (NuMRP).

Its subcellular location is the mitochondrion. Functionally, involved in spore wall assembly. May be a component of the mitochondrial RNase MRP (MtMRP), a ribonucleoprotein endoribonuclease involved in the cleaving RNA transcripts to generate primers for DNA replication in mitochondria. The polypeptide is Outer spore wall assembly protein SHE10 (Saccharomyces cerevisiae (strain Lalvin EC1118 / Prise de mousse) (Baker's yeast)).